The sequence spans 337 residues: Fructose-1,6-bisphosphatase class 1 (337 aa).

Residues E94, D116, L118, and D119 each contribute to the Mg(2+) site. Substrate-binding positions include 119–122 (DGSS), N210, and K276. A Mg(2+)-binding site is contributed by E282.

Belongs to the FBPase class 1 family. As to quaternary structure, homotetramer. The cofactor is Mg(2+).

It is found in the cytoplasm. It carries out the reaction beta-D-fructose 1,6-bisphosphate + H2O = beta-D-fructose 6-phosphate + phosphate. It participates in carbohydrate biosynthesis; gluconeogenesis. This chain is Fructose-1,6-bisphosphatase class 1, found in Burkholderia lata (strain ATCC 17760 / DSM 23089 / LMG 22485 / NCIMB 9086 / R18194 / 383).